We begin with the raw amino-acid sequence, 90 residues long: DNA-binding protein HU (90 aa).

The protein belongs to the bacterial histone-like protein family. In terms of assembly, homodimer.

Histone-like DNA-binding protein which is capable of wrapping DNA to stabilize it, and thus to prevent its denaturation under extreme environmental conditions. This Pasteurella multocida (strain Pm70) protein is DNA-binding protein HU (hup).